The chain runs to 230 residues: Bidirectional sugar transporter SWEET16 (230 aa).

At 1-3 (MAD) the chain is on the extracellular side. The chain crosses the membrane as a helical span at residues 4–24 (LSFYVGVIGNVISVLVFLSPV). Residues 6-92 (FYVGVIGNVI…LIFLFFVPKS (87 aa)) form the MtN3/slv 1 domain. Residues 25–40 (ETFWRIVQRRSTEEYE) lie on the Cytoplasmic side of the membrane. Residues 41 to 61 (CFPYICTLMSSSLWTYYGIVT) traverse the membrane as a helical segment. Over 62–69 (PGEYLVST) the chain is Extracellular. Residues 70-90 (VNGFGALAESIYVLIFLFFVP) form a helical membrane-spanning segment. The Cytoplasmic segment spans residues 91–93 (KSR). Residues 94-114 (FLKTVVVVLALNVCFPVIAIA) form a helical membrane-spanning segment. The Extracellular segment spans residues 115 to 128 (GTRTLFGDANSRSS). The helical transmembrane segment at 129 to 149 (SMGFICATLNIIMYGSPLSAI) threads the bilayer. The region spanning 129-212 (SMGFICATLN…LLIYAYYRNA (84 aa)) is the MtN3/slv 2 domain. The Cytoplasmic segment spans residues 150 to 162 (KTVVTTRSVQFMP). A helical membrane pass occupies residues 163-183 (FWLSFFLFLNGAIWGVYALLL). Residues 184 to 185 (HD) lie on the Extracellular side of the membrane. Residues 186–206 (MFLLVPNGMGFFLGIMQLLIY) traverse the membrane as a helical segment. At 207–230 (AYYRNAEPIVEDEEGLIPNQPLLA) the chain is on the cytoplasmic side.

The protein belongs to the SWEET sugar transporter family. Forms homooligomers and heterooligomers with SWEET1, SWEET7, SWEET8, SWEET9 and SWEET17. In terms of tissue distribution, mostly expressed in the cortex of mature roots, and, to a lower extent, in aerial organs such as leaves, stems, and flowers. Mainly present in vascular parenchyma cells, especially in the petiole vasculature, flower stalks and at the base of individual, not fully developed flowers.

Its subcellular location is the vacuole membrane. Mediates both low-affinity uptake and efflux of sugar across the vacuolar membrane. Regulates sugars homeostasis in leaves and roots by exporting/importing them through the tonoplast regarding metabolic demand. Acts as a vacuolar hexose transporter, such as glucose (Glc), fructose (Fru), and sucrose (Suc). The polypeptide is Bidirectional sugar transporter SWEET16 (Arabidopsis thaliana (Mouse-ear cress)).